The following is a 506-amino-acid chain: Phase 2 flagellin (506 aa).

It belongs to the bacterial flagellin family.

It localises to the secreted. Its subcellular location is the bacterial flagellum. Its function is as follows. Flagellin is the subunit protein which polymerizes to form the filaments of bacterial flagella. In Salmonella typhimurium (strain LT2 / SGSC1412 / ATCC 700720), this protein is Phase 2 flagellin (fljB).